The following is a 324-amino-acid chain: Lactonase drp35 (324 aa).

Residues E47, S109, G111, D129, T132, Y134, D137, N184, D235, and S236 each contribute to the Ca(2+) site. D235 serves as the catalytic Proton donor.

This sequence belongs to the SMP-30/CGR1 family. It depends on Ca(2+) as a cofactor.

It is found in the cytoplasm. Its function is as follows. Exhibits lactonase activity. Acts in cells with perturbed membrane integrity and is possibly related to the membrane homeostasis. The chain is Lactonase drp35 (drp35) from Staphylococcus saprophyticus subsp. saprophyticus (strain ATCC 15305 / DSM 20229 / NCIMB 8711 / NCTC 7292 / S-41).